We begin with the raw amino-acid sequence, 63 residues long: MKATELKDKSVEELNAELINLLREQFNLRMQHTTGQLEKTDQLRKVRRNIARVKTILTQKADA.

This sequence belongs to the universal ribosomal protein uL29 family.

This chain is Large ribosomal subunit protein uL29, found in Alteromonas mediterranea (strain DSM 17117 / CIP 110805 / LMG 28347 / Deep ecotype).